We begin with the raw amino-acid sequence, 107 residues long: Large ribosomal subunit protein uL24 (107 aa).

It belongs to the universal ribosomal protein uL24 family. In terms of assembly, part of the 50S ribosomal subunit.

Functionally, one of two assembly initiator proteins, it binds directly to the 5'-end of the 23S rRNA, where it nucleates assembly of the 50S subunit. One of the proteins that surrounds the polypeptide exit tunnel on the outside of the subunit. This chain is Large ribosomal subunit protein uL24, found in Neisseria meningitidis serogroup C (strain 053442).